A 176-amino-acid polypeptide reads, in one-letter code: dCTP deaminase (176 aa).

DCTP-binding positions include 99-104 (RSTLAR) and Asp-115. Glu-125 (proton donor/acceptor) is an active-site residue. Gln-163 provides a ligand contact to dCTP.

Belongs to the dCTP deaminase family. Homotrimer.

The enzyme catalyses dCTP + H2O + H(+) = dUTP + NH4(+). The protein operates within pyrimidine metabolism; dUMP biosynthesis; dUMP from dCTP (dUTP route): step 1/2. Catalyzes the deamination of dCTP to dUTP. The chain is dCTP deaminase from Pyrobaculum islandicum (strain DSM 4184 / JCM 9189 / GEO3).